Here is a 418-residue protein sequence, read N- to C-terminus: Gamma-glutamyl phosphate reductase (418 aa).

Belongs to the gamma-glutamyl phosphate reductase family.

It is found in the cytoplasm. It carries out the reaction L-glutamate 5-semialdehyde + phosphate + NADP(+) = L-glutamyl 5-phosphate + NADPH + H(+). It functions in the pathway amino-acid biosynthesis; L-proline biosynthesis; L-glutamate 5-semialdehyde from L-glutamate: step 2/2. Functionally, catalyzes the NADPH-dependent reduction of L-glutamate 5-phosphate into L-glutamate 5-semialdehyde and phosphate. The product spontaneously undergoes cyclization to form 1-pyrroline-5-carboxylate. This chain is Gamma-glutamyl phosphate reductase, found in Parafrankia sp. (strain EAN1pec).